A 475-amino-acid polypeptide reads, in one-letter code: UDP-N-acetylmuramate--L-alanine ligase (475 aa).

Residue 114 to 120 coordinates ATP; that stretch reads GTHGKTT.

It belongs to the MurCDEF family.

It localises to the cytoplasm. It carries out the reaction UDP-N-acetyl-alpha-D-muramate + L-alanine + ATP = UDP-N-acetyl-alpha-D-muramoyl-L-alanine + ADP + phosphate + H(+). Its pathway is cell wall biogenesis; peptidoglycan biosynthesis. In terms of biological role, cell wall formation. This is UDP-N-acetylmuramate--L-alanine ligase from Bartonella henselae (strain ATCC 49882 / DSM 28221 / CCUG 30454 / Houston 1) (Rochalimaea henselae).